The chain runs to 224 residues: Oocyte zinc finger protein XlCOF6.1 (224 aa).

C2H2-type zinc fingers lie at residues 6-28, 34-56, 62-84, 90-112, 118-140, 146-168, 174-196, and 202-224; these read FSCSVCGKCFALKTELTIHCRSH, FHCTECGKYFQHRSNLRRHQRYH, FTCFECGTCFVNYSWLMLHIRMH, FSCSECGKRFARRSVLEAHQKIH, FSCSECGKGFIKQCDLARHYRTH, FPCPECGKCFTQSMQLIRHRRTH, FACSECGKCFAQNSHLTQHRLGH, and FSCSECGKCFSRRSHLIAHLKSH.

Belongs to the krueppel C2H2-type zinc-finger protein family.

It is found in the nucleus. Its function is as follows. May be involved in transcriptional regulation. This Xenopus laevis (African clawed frog) protein is Oocyte zinc finger protein XlCOF6.1.